A 2264-amino-acid polypeptide reads, in one-letter code: Protein Ycf2 (2264 aa).

An ATP-binding site is contributed by Gly1611–Ser1618.

This sequence belongs to the Ycf2 family.

It is found in the plastid. The protein localises to the chloroplast stroma. Probable ATPase of unknown function. Its presence in a non-photosynthetic plant (Epifagus virginiana) and experiments in tobacco indicate that it has an essential function which is probably not related to photosynthesis. This is Protein Ycf2 from Lactuca sativa (Garden lettuce).